The sequence spans 220 residues: Probable nicotinate-nucleotide adenylyltransferase (220 aa).

The protein belongs to the NadD family.

The catalysed reaction is nicotinate beta-D-ribonucleotide + ATP + H(+) = deamido-NAD(+) + diphosphate. The protein operates within cofactor biosynthesis; NAD(+) biosynthesis; deamido-NAD(+) from nicotinate D-ribonucleotide: step 1/1. Functionally, catalyzes the reversible adenylation of nicotinate mononucleotide (NaMN) to nicotinic acid adenine dinucleotide (NaAD). In Yersinia pseudotuberculosis serotype O:1b (strain IP 31758), this protein is Probable nicotinate-nucleotide adenylyltransferase.